The following is a 213-amino-acid chain: Flagellar transcriptional regulator FlhC (213 aa).

Residues C138, C141, C158, and C161 each coordinate Zn(2+).

It belongs to the FlhC family. As to quaternary structure, heterohexamer composed of two FlhC and four FlhD subunits. Each FlhC binds a FlhD dimer, forming a heterotrimer, and a hexamer assembles by dimerization of two heterotrimers. Zn(2+) is required as a cofactor.

The protein resides in the cytoplasm. Its function is as follows. Functions in complex with FlhD as a master transcriptional regulator that regulates transcription of several flagellar and non-flagellar operons by binding to their promoter region. Activates expression of class 2 flagellar genes, including fliA, which is a flagellum-specific sigma factor that turns on the class 3 genes. Also regulates genes whose products function in a variety of physiological pathways. In Cupriavidus metallidurans (strain ATCC 43123 / DSM 2839 / NBRC 102507 / CH34) (Ralstonia metallidurans), this protein is Flagellar transcriptional regulator FlhC.